The primary structure comprises 539 residues: uncharacterized protein (539 aa).

This sequence belongs to the transposase 25 family.

This is an uncharacterized protein from Sinorhizobium fredii (strain NBRC 101917 / NGR234).